We begin with the raw amino-acid sequence, 623 residues long: Putative ABC transporter ATP-binding protein MG014 (623 aa).

The ABC transmembrane type-1 domain occupies leucine 16–serine 325. A run of 6 helical transmembrane segments spans residues isoleucine 27–isoleucine 47, valine 81–isoleucine 101, phenylalanine 157–threonine 177, aspartate 181–asparagine 201, asparagine 266–phenylalanine 286, and isoleucine 307–threonine 327. In terms of domain architecture, ABC transporter spans leucine 365 to serine 611. Glycine 400–serine 407 lines the ATP pocket.

Belongs to the ABC transporter superfamily.

It localises to the cell membrane. This Mycoplasma genitalium (strain ATCC 33530 / DSM 19775 / NCTC 10195 / G37) (Mycoplasmoides genitalium) protein is Putative ABC transporter ATP-binding protein MG014.